The sequence spans 308 residues: GATA transcription factor 9 (308 aa).

A disordered region spans residues 34–57 (DDGLNTLPDSSTLSTGTLTDSSNS). A compositionally biased stretch (low complexity) spans 39-57 (TLPDSSTLSTGTLTDSSNS). A Nuclear localization signal motif is present at residues 142-149 (KARSKRSR). The segment at 193 to 247 (SGGGRRCLHCATEKTPQWRTGPMGPKTLCNACGVRYKSGRLVPEYRPASSPTFVM) adopts a GATA-type zinc-finger fold.

Belongs to the type IV zinc-finger family. Class A subfamily.

It is found in the nucleus. Functionally, transcriptional activator that specifically binds 5'-GATA-3' or 5'-GAT-3' motifs within gene promoters. May be involved in the regulation of some light-responsive genes. This Arabidopsis thaliana (Mouse-ear cress) protein is GATA transcription factor 9 (GATA9).